The chain runs to 240 residues: UDP-2,3-diacylglucosamine hydrolase (240 aa).

Mn(2+) is bound by residues Asp-9, His-11, Asp-43, Asn-81, and His-116. 81–82 is a binding site for substrate; sequence NR. Residues Asp-124, Ser-162, Lys-166, Lys-169, and His-197 each contribute to the substrate site. Residues His-197 and His-199 each contribute to the Mn(2+) site.

The protein belongs to the LpxH family. Mn(2+) serves as cofactor.

It is found in the cell inner membrane. It carries out the reaction UDP-2-N,3-O-bis[(3R)-3-hydroxytetradecanoyl]-alpha-D-glucosamine + H2O = 2-N,3-O-bis[(3R)-3-hydroxytetradecanoyl]-alpha-D-glucosaminyl 1-phosphate + UMP + 2 H(+). The protein operates within glycolipid biosynthesis; lipid IV(A) biosynthesis; lipid IV(A) from (3R)-3-hydroxytetradecanoyl-[acyl-carrier-protein] and UDP-N-acetyl-alpha-D-glucosamine: step 4/6. In terms of biological role, hydrolyzes the pyrophosphate bond of UDP-2,3-diacylglucosamine to yield 2,3-diacylglucosamine 1-phosphate (lipid X) and UMP by catalyzing the attack of water at the alpha-P atom. Involved in the biosynthesis of lipid A, a phosphorylated glycolipid that anchors the lipopolysaccharide to the outer membrane of the cell. This chain is UDP-2,3-diacylglucosamine hydrolase, found in Neisseria meningitidis serogroup C (strain 053442).